The sequence spans 524 residues: Inosine-5'-monophosphate dehydrogenase (524 aa).

2 consecutive CBS domains span residues 121–180 (FILD…NTPV) and 184–242 (MTPR…PLAS). NAD(+)-binding positions include 280–282 (DSS) and 330–332 (GMG). K(+) contacts are provided by G332 and G334. S335 provides a ligand contact to IMP. C337 is a binding site for K(+). C337 serves as the catalytic Thioimidate intermediate. IMP contacts are provided by residues 370–372 (DGG), 393–394 (GG), and 417–421 (YRGMG). R439 acts as the Proton acceptor in catalysis. IMP is bound at residue Q451. E510 and G511 together coordinate K(+).

The protein belongs to the IMPDH/GMPR family. Homotetramer. The cofactor is K(+).

Its subcellular location is the cytoplasm. The catalysed reaction is IMP + NAD(+) + H2O = XMP + NADH + H(+). The protein operates within purine metabolism; XMP biosynthesis via de novo pathway; XMP from IMP: step 1/1. Its activity is regulated as follows. Mycophenolic acid (MPA) is a non-competitive inhibitor that prevents formation of the closed enzyme conformation by binding to the same site as the amobile flap. In contrast, mizoribine monophosphate (MZP) is a competitive inhibitor that induces the closed conformation. MPA is a potent inhibitor of mammalian IMPDHs but a poor inhibitor of the bacterial enzymes. MZP is a more potent inhibitor of bacterial IMPDH. Functionally, catalyzes the conversion of inosine 5'-phosphate (IMP) to xanthosine 5'-phosphate (XMP), the first committed and rate-limiting step in the de novo synthesis of guanine nucleotides, and therefore plays an important role in the regulation of cell growth. The polypeptide is Inosine-5'-monophosphate dehydrogenase (gua1) (Schizosaccharomyces pombe (strain 972 / ATCC 24843) (Fission yeast)).